The chain runs to 434 residues: Histidinol dehydrogenase (434 aa).

Tyr-130, Gln-188, and Asn-211 together coordinate NAD(+). Ser-237, Gln-259, and His-262 together coordinate substrate. Zn(2+) contacts are provided by Gln-259 and His-262. Catalysis depends on proton acceptor residues Glu-326 and His-327. His-327, Asp-360, Glu-414, and His-419 together coordinate substrate. A Zn(2+)-binding site is contributed by Asp-360. His-419 lines the Zn(2+) pocket.

It belongs to the histidinol dehydrogenase family. Homodimer. Zn(2+) serves as cofactor.

The enzyme catalyses L-histidinol + 2 NAD(+) + H2O = L-histidine + 2 NADH + 3 H(+). The protein operates within amino-acid biosynthesis; L-histidine biosynthesis; L-histidine from 5-phospho-alpha-D-ribose 1-diphosphate: step 9/9. Its function is as follows. Catalyzes the sequential NAD-dependent oxidations of L-histidinol to L-histidinaldehyde and then to L-histidine. The sequence is that of Histidinol dehydrogenase from Shigella boydii serotype 4 (strain Sb227).